We begin with the raw amino-acid sequence, 161 residues long: Peroxynitrite isomerase 2 (161 aa).

Positions G17 to G23 match the GXWXGXG motif. Heme b is bound at residue H152.

It belongs to the nitrobindin family. In terms of assembly, homodimer. It depends on heme b as a cofactor.

The enzyme catalyses peroxynitrite = nitrate. Its pathway is nitrogen metabolism. Heme-binding protein able to scavenge peroxynitrite and to protect free L-tyrosine against peroxynitrite-mediated nitration, by acting as a peroxynitrite isomerase that converts peroxynitrite to nitrate. Therefore, this protein likely plays a role in peroxynitrite sensing and in the detoxification of reactive nitrogen and oxygen species (RNS and ROS, respectively). Is able to bind nitric oxide (NO) in vitro, but may act as a sensor of peroxynitrite levels in vivo. The protein is Peroxynitrite isomerase 2 of Mycobacterium ulcerans (strain Agy99).